A 396-amino-acid polypeptide reads, in one-letter code: Lipid-A-disaccharide synthase (396 aa).

Belongs to the LpxB family.

It catalyses the reaction a lipid X + a UDP-2-N,3-O-bis[(3R)-3-hydroxyacyl]-alpha-D-glucosamine = a lipid A disaccharide + UDP + H(+). It participates in bacterial outer membrane biogenesis; LPS lipid A biosynthesis. In terms of biological role, condensation of UDP-2,3-diacylglucosamine and 2,3-diacylglucosamine-1-phosphate to form lipid A disaccharide, a precursor of lipid A, a phosphorylated glycolipid that anchors the lipopolysaccharide to the outer membrane of the cell. The polypeptide is Lipid-A-disaccharide synthase (Acinetobacter baylyi (strain ATCC 33305 / BD413 / ADP1)).